Consider the following 339-residue polypeptide: Deoxyhypusine hydroxylase (339 aa).

HEAT-like PBS-type repeat units follow at residues 71–97 (LKHELAYCLGQTRNPDAVSYLLEVVKN) and 104–130 (CRHEAAEGLGALGFDTSLDVLKALRDD). The Fe cation site is built by histidine 73, glutamate 74, histidine 106, and glutamate 107. The tract at residues 159 to 183 (EKLKPSDFTSIDPAPPLPMASSQPS) is disordered. 3 HEAT-like PBS-type repeats span residues 200 to 233 (QRYRAMFALRDLASPPDLPTAVEAVEALAKGLKD), 238 to 264 (FRHEVAFVFGQLCHPASVPSLTETLSD), and 271 to 298 (VRHEAAEALGSLGDVEGVEDTLKKFLND). Fe cation contacts are provided by histidine 240, glutamate 241, histidine 273, and glutamate 274.

The protein belongs to the deoxyhypusine hydroxylase family. Requires Fe(2+) as cofactor.

It is found in the cytoplasm. Its subcellular location is the nucleus. The enzyme catalyses [eIF5A protein]-deoxyhypusine + AH2 + O2 = [eIF5A protein]-hypusine + A + H2O. It functions in the pathway protein modification; eIF5A hypusination. Its function is as follows. Catalyzes the hydroxylation of the N(6)-(4-aminobutyl)-L-lysine intermediate to form hypusine, an essential post-translational modification only found in mature eIF-5A factor. This is Deoxyhypusine hydroxylase (lia1) from Aspergillus oryzae (strain ATCC 42149 / RIB 40) (Yellow koji mold).